Reading from the N-terminus, the 465-residue chain is Serine hydroxymethyltransferase (465 aa).

N6-(pyridoxal phosphate)lysine is present on Lys-241.

The protein belongs to the SHMT family. As to quaternary structure, homotetramer. Pyridoxal 5'-phosphate is required as a cofactor. As to expression, highest expression in the ovary and testis. 6- to 7-fold lower expression in hemocyte, silk gland, midgut and fat body.

The catalysed reaction is (6R)-5,10-methylene-5,6,7,8-tetrahydrofolate + glycine + H2O = (6S)-5,6,7,8-tetrahydrofolate + L-serine. It functions in the pathway one-carbon metabolism; tetrahydrofolate interconversion. Interconversion of serine and glycine. The polypeptide is Serine hydroxymethyltransferase (692975) (Bombyx mori (Silk moth)).